The sequence spans 426 residues: Putative phosphate permease CT_962 (426 aa).

11 helical membrane-spanning segments follow: residues 1-21 (MWLLLVCVVVGGFYTAWNIGA), 37-57 (LTLKQAVLIAAVFEFLGAVLL), 83-103 (VFGMTAALLATGVWLQIASFC), 104-124 (GWPVSTTHAIVGAVLGFGIIL), 140-160 (VSWLASPIIGGYFAFLIFSFI), 183-203 (AIIIFALGLVLILSGAVAPVI), 207-227 (PALRIVCGLSLFAFFFTIWGI), 260-280 (LIVERIFAYLQMIIACFMSFA), 309-329 (VLLVFMSLGGLGLVCGLATWG), 365-385 (LGFPISTTHVVVGSVLGIGFA), and 399-419 (IVLSWFITVPAGAALSIVFFL).

Belongs to the inorganic phosphate transporter (PiT) (TC 2.A.20) family.

Its subcellular location is the cell membrane. Its function is as follows. Potential transporter for phosphate. The sequence is that of Putative phosphate permease CT_962 from Chlamydia trachomatis serovar D (strain ATCC VR-885 / DSM 19411 / UW-3/Cx).